A 398-amino-acid polypeptide reads, in one-letter code: Tyrosine--tRNA ligase (398 aa).

The 'HIGH' region signature appears at 48–57 (PTGADIHLGH). The 'KMSKS' region signature appears at 235 to 239 (KMSKS). Lys238 is an ATP binding site. The 65-residue stretch at 334–398 (VKLAYLLGAT…GKNKFMRLVP (65 aa)) folds into the S4 RNA-binding domain.

It belongs to the class-I aminoacyl-tRNA synthetase family. TyrS type 2 subfamily. As to quaternary structure, homodimer.

The protein resides in the cytoplasm. The catalysed reaction is tRNA(Tyr) + L-tyrosine + ATP = L-tyrosyl-tRNA(Tyr) + AMP + diphosphate + H(+). Functionally, catalyzes the attachment of tyrosine to tRNA(Tyr) in a two-step reaction: tyrosine is first activated by ATP to form Tyr-AMP and then transferred to the acceptor end of tRNA(Tyr). This chain is Tyrosine--tRNA ligase, found in Nostoc sp. (strain PCC 7120 / SAG 25.82 / UTEX 2576).